A 128-amino-acid polypeptide reads, in one-letter code: Large ribosomal subunit protein bL19 (128 aa).

The protein belongs to the bacterial ribosomal protein bL19 family.

Functionally, this protein is located at the 30S-50S ribosomal subunit interface and may play a role in the structure and function of the aminoacyl-tRNA binding site. The sequence is that of Large ribosomal subunit protein bL19 from Azoarcus sp. (strain BH72).